A 430-amino-acid chain; its full sequence is Adenylosuccinate synthetase (430 aa).

Residues 13–19 and 41–43 each bind GTP; these read GDEGKGK and GHT. The active-site Proton acceptor is D14. Mg(2+) is bound by residues D14 and G41. IMP contacts are provided by residues 14-17, 39-42, T130, R144, Q225, T240, and R304; these read DEGK and NAGH. H42 functions as the Proton donor in the catalytic mechanism. A substrate-binding site is contributed by 300–306; the sequence is ATTGRAR. Residues R306, 332-334, and 414-416 each bind GTP; these read KLD and STG.

It belongs to the adenylosuccinate synthetase family. As to quaternary structure, homodimer. Requires Mg(2+) as cofactor.

Its subcellular location is the cytoplasm. The enzyme catalyses IMP + L-aspartate + GTP = N(6)-(1,2-dicarboxyethyl)-AMP + GDP + phosphate + 2 H(+). It functions in the pathway purine metabolism; AMP biosynthesis via de novo pathway; AMP from IMP: step 1/2. Plays an important role in the de novo pathway of purine nucleotide biosynthesis. Catalyzes the first committed step in the biosynthesis of AMP from IMP. This chain is Adenylosuccinate synthetase, found in Pseudomonas aeruginosa (strain LESB58).